Here is a 415-residue protein sequence, read N- to C-terminus: MSVTPEVKSRGMKFAEEQLLKHGWTQGKGLGRRENGITQALKVTLKQDNHGVGHDPAKEFTDHWWSDLFNKTAASLVVDSGKDGVQIRRLSKETTQRSHPKPSLLYQKFVKTATLTSGEEKPDRDLGNCSDVDNHEPTPPKILTDEMLLKACEGRTAHKAARIGITMKAKLARLEAQEQAFLAQLKGSKALGTSQPLTDSEPSQKKKKKRKQKEGEEAATTEKSLGDELLGHTDRSFRDSRKKKKRQKAERQGTAIGSEEEEAAGESGPRELSTEQSDQPSRKKKKRRKQRHEEDGEMGVCDEGGRDVTSRPKAVNSGGDKDPRRSSKKRGTCGEDLDTQEEEGKDDLTKGERKVRRKDKRKRQQCCEEDLDVSSKDDGGTWVAEDAGERSRQYPKERAKKKKRKRDRGSEVDLS.

M1 bears the N-acetylmethionine mark. T4 carries the phosphothreonine modification. The region spanning 11 to 57 is the G-patch domain; the sequence is GMKFAEEQLLKHGWTQGKGLGRRENGITQALKVTLKQDNHGVGHDPA. K46 participates in a covalent cross-link: Glycyl lysine isopeptide (Lys-Gly) (interchain with G-Cter in SUMO2). T116 carries the phosphothreonine modification. Disordered stretches follow at residues 116–141 and 191–415; these read TSGE…TPPK and LGTS…VDLS. Positions 118–141 are enriched in basic and acidic residues; the sequence is GEEKPDRDLGNCSDVDNHEPTPPK. Position 130 is a phosphoserine (S130). Over residues 191–201 the composition is skewed to polar residues; the sequence is LGTSQPLTDSE. Basic and acidic residues predominate over residues 224–239; that stretch reads SLGDELLGHTDRSFRD. Residue S258 is modified to Phosphoserine. A compositionally biased stretch (acidic residues) spans 335-345; the sequence is EDLDTQEEEGK. Residues 353-364 show a composition bias toward basic residues; sequence RKVRRKDKRKRQ. A compositionally biased stretch (basic and acidic residues) spans 387–397; that stretch reads AGERSRQYPKE. Positions 398–407 are enriched in basic residues; it reads RAKKKKRKRD.

The chain is G patch domain-containing protein 4 (Gpatch4) from Mus musculus (Mouse).